An 87-amino-acid chain; its full sequence is uncharacterized protein (87 aa).

Residues 25–47 (FFWEVCNMILFIIIALCGYLLFS) form a helical membrane-spanning segment.

It localises to the membrane. This is an uncharacterized protein from Bacillus subtilis (strain 168).